Reading from the N-terminus, the 22-residue chain is 50 kDa cell wall protein (22 aa).

It localises to the secreted. Its subcellular location is the cell wall. The sequence is that of 50 kDa cell wall protein from Nicotiana tabacum (Common tobacco).